A 114-amino-acid chain; its full sequence is Non-specific lipid-transfer protein 1 (114 aa).

Residues 1–25 form the signal peptide; it reads MIKGLAITVVAVLAVVQLLARPSDA. 4 disulfide bridges follow: Cys29/Cys76, Cys39/Cys53, Cys54/Cys99, and Cys74/Cys113.

Belongs to the plant LTP family. As to expression, expressed in seeds and, at very low levels, in pulp of fruit (at protein level).

Functionally, plant non-specific lipid-transfer proteins transfer phospholipids as well as galactolipids across membranes. May play a role in wax or cutin deposition in the cell walls of expanding epidermal cells and certain secretory tissues. This chain is Non-specific lipid-transfer protein 1, found in Actinidia chinensis var. chinensis (Chinese soft-hair kiwi).